The following is a 138-amino-acid chain: Glia maturation factor (138 aa).

The ADF-H domain occupies 3 to 138 (DNQICDISNE…TEEWLKAKLK (136 aa)).

This sequence belongs to the actin-binding proteins ADF family. GMF subfamily. As to expression, in ovaries, expressed in follicular epithelium, in polar cells, migrating border cells, and centripedal cells (at protein level).

The protein resides in the cell projection. It localises to the lamellipodium. The protein localises to the cytoplasm. It is found in the perinuclear region. Its subcellular location is the nucleus. The protein resides in the cell cortex. Its function is as follows. Inhibits Arp2/3-mediated actin nucleation. Together with flr, promotes Arp2/3-nucleated actin filament array disassembly. Promotes debranching. Regulates lamellipodial protrusion dynamics possibly by facilitating lamellipodial retraction. In egg chambers, enhances the retraction dynamics of cellular extensions in border cells and thus together with flr plays an important role in directional migration of border cell clusters. This is Glia maturation factor from Drosophila melanogaster (Fruit fly).